Consider the following 211-residue polypeptide: tRNA (guanine-N(7)-)-methyltransferase (211 aa).

Residues glutamate 43, glutamate 68, asparagine 95, and aspartate 117 each coordinate S-adenosyl-L-methionine. Aspartate 117 is an active-site residue. Substrate is bound by residues lysine 121, aspartate 153, and 190 to 193 (TEYE).

The protein belongs to the class I-like SAM-binding methyltransferase superfamily. TrmB family.

The catalysed reaction is guanosine(46) in tRNA + S-adenosyl-L-methionine = N(7)-methylguanosine(46) in tRNA + S-adenosyl-L-homocysteine. It participates in tRNA modification; N(7)-methylguanine-tRNA biosynthesis. Functionally, catalyzes the formation of N(7)-methylguanine at position 46 (m7G46) in tRNA. The polypeptide is tRNA (guanine-N(7)-)-methyltransferase (Alkaliphilus oremlandii (strain OhILAs) (Clostridium oremlandii (strain OhILAs))).